The primary structure comprises 319 residues: Ribonuclease Z (319 aa).

The Zn(2+) site is built by His-62, His-64, Asp-66, His-67, His-145, Asp-216, and His-274. Asp-66 serves as the catalytic Proton acceptor.

Belongs to the RNase Z family. Homodimer. Requires Zn(2+) as cofactor.

It catalyses the reaction Endonucleolytic cleavage of RNA, removing extra 3' nucleotides from tRNA precursor, generating 3' termini of tRNAs. A 3'-hydroxy group is left at the tRNA terminus and a 5'-phosphoryl group is left at the trailer molecule.. Functionally, zinc phosphodiesterase, which displays some tRNA 3'-processing endonuclease activity. Probably involved in tRNA maturation, by removing a 3'-trailer from precursor tRNA. This is Ribonuclease Z from Synechococcus sp. (strain CC9902).